The primary structure comprises 917 residues: DNA mismatch repair protein spellchecker 1 (917 aa).

667 to 674 (GPNMGGKS) contacts ATP.

This sequence belongs to the DNA mismatch repair MutS family. As to quaternary structure, heterodimer of Msh2/Spel and Msh6.

The protein resides in the nucleus. Involved in postreplication mismatch repair. Binds specifically to DNA containing mismatched nucleotides thus providing a target for the excision repair processes characteristic of postreplication mismatch repair. This is DNA mismatch repair protein spellchecker 1 (spel1) from Drosophila melanogaster (Fruit fly).